A 551-amino-acid polypeptide reads, in one-letter code: MVDRKEIPLAMGLLAVLLFFVASSSSFHLVRASDEVDDAIFYESFDEDFDNRWIVSGKEEYNGVWKHSKSEGHDDFGLLVSEPARKYAIVKELDAPVSLKDGTVVLQFETRLQNGLECGGAYIKYLQTQESGWKPKGFDNESGYSIMFGPDRCGATNKVHFIFRHKNPKTGKHVEHHLKFPPSVPSDKLSHVYTAVLKDDNEVSILIDGEEKKKANFLSSEDFEPALIPSKTIPDPDDKKPEDWDERAKIPDPEAVKPEDWDEDAPREIIDEEAEKPEPWLDHEPEVDDPEAKPEDWDDEEDGEWEAPKIENPKCEAAPGCGEWKRPTKSNPAYKGKWSAPYIDNPNYKGIWKPQEIPNPEYFELEKPDFEPIAAIGIEIWTMQDGILFDNVLIAKDDKIAESYRETTWKPKFNIEKEKQKHEEEAAAAAAARSESEGIAGIQKKAFDLLYKIADIAFLSGQKEKIIEIIEKGEKQPNLTIGIIVSVVIVFVSIFFRLIFGGKKPANVEANVEKKKTNTETTSKQDGGEKEDNKEKEETANPPRRRPKRDN.

The N-terminal stretch at 1 to 26 (MVDRKEIPLAMGLLAVLLFFVASSSS) is a signal peptide. Residues 27–480 (FHLVRASDEV…EKGEKQPNLT (454 aa)) lie on the Lumenal side of the membrane. 2 residues coordinate Ca(2+): S44 and D75. Cysteines 118 and 153 form a disulfide. An alpha-D-glucoside-binding residues include Y122 and K124. N140 carries N-linked (GlcNAc...) asparagine glycosylation. An alpha-D-glucoside-binding residues include Y144 and D151. A disordered region spans residues 226 to 330 (ALIPSKTIPD…CGEWKRPTKS (105 aa)). A p domain (Extended arm) region spans residues 233-364 (IPDPDDKKPE…QEIPNPEYFE (132 aa)). Basic and acidic residues-rich tracts occupy residues 234–269 (PDPD…PREI) and 276–295 (KPEP…AKPE). 5 tandem repeats follow at residues 235–246 (DPDDKKPEDWDE), 252–263 (DPEAVKPEDWDE), 271–282 (DEEAEKPEPWLD), 289–299 (DPEAKPEDWDD), and 303–313 (GEWEAPKIENP). 4 X approximate repeats regions lie at residues 235-299 (DPDD…DWDD) and 303-360 (GEWE…IPNP). A compositionally biased stretch (acidic residues) spans 296-305 (DWDDEEDGEW). A disulfide bridge links C315 with C321. Tandem repeats lie at residues 322–332 (GEWKRPTKSNP), 336–346 (GKWSAPYIDNP), and 350–360 (GIWKPQEIPNP). Residue E379 participates in an alpha-D-glucoside binding. Position 390 (D390) interacts with Ca(2+). N478 is a glycosylation site (N-linked (GlcNAc...) asparagine). A helical membrane pass occupies residues 481 to 501 (IGIIVSVVIVFVSIFFRLIFG). The Cytoplasmic segment spans residues 502–551 (GKKPANVEANVEKKKTNTETTSKQDGGEKEDNKEKEETANPPRRRPKRDN). The interval 510–551 (ANVEKKKTNTETTSKQDGGEKEDNKEKEETANPPRRRPKRDN) is disordered. Residues 526–539 (DGGEKEDNKEKEET) show a composition bias toward basic and acidic residues.

It belongs to the calreticulin family. As to expression, in vegetative and flowering tissues.

The protein resides in the endoplasmic reticulum membrane. Functionally, calcium-binding protein that interacts with newly synthesized monoglucosylated glycoproteins in the endoplasmic reticulum. It may act in assisting protein assembly and/or in the retention within the ER of unassembled protein subunits. It seems to play a major role in the quality control apparatus of the ER by the retention of incorrectly folded proteins. The chain is Calnexin homolog from Pisum sativum (Garden pea).